The primary structure comprises 147 residues: MDRSVVTQKIIEAKVRNGMKWSDIAKAIGESKEWVTAGCLGQMTFTKVQAEAAGKLFDLTDEEMAWLQIVPYKGSLPTAVPTDPLIYRWYEIVSVYGTTIKELIHEEFGDGIMSAIDFSMDIQREPDPKGDRVQVVLSGKYLSYKTY.

Residues Arg-88, Glu-91, and Ser-114 contribute to the active site.

This sequence belongs to the cyanase family.

The catalysed reaction is cyanate + hydrogencarbonate + 3 H(+) = NH4(+) + 2 CO2. Catalyzes the reaction of cyanate with bicarbonate to produce ammonia and carbon dioxide. The polypeptide is Cyanate hydratase (Polynucleobacter asymbioticus (strain DSM 18221 / CIP 109841 / QLW-P1DMWA-1) (Polynucleobacter necessarius subsp. asymbioticus)).